A 136-amino-acid chain; its full sequence is Urease subunit beta (136 aa).

A disordered region spans residues 112–136; that stretch reads ENDEYAGVFGDNGTENVNKKGGKRS.

This sequence belongs to the urease beta subunit family. In terms of assembly, heterotrimer of UreA (gamma), UreB (beta) and UreC (alpha) subunits. Three heterotrimers associate to form the active enzyme.

It is found in the cytoplasm. It carries out the reaction urea + 2 H2O + H(+) = hydrogencarbonate + 2 NH4(+). It participates in nitrogen metabolism; urea degradation; CO(2) and NH(3) from urea (urease route): step 1/1. This chain is Urease subunit beta, found in Staphylococcus aureus (strain MRSA252).